The following is a 359-amino-acid chain: DNA-directed RNA polymerase RPB3-11 homolog (359 aa).

The protein in the N-terminal section; belongs to the archaeal RpoD/eukaryotic RPB3 RNA polymerase subunit family. This sequence in the C-terminal section; belongs to the archaeal RpoL/eukaryotic RPB11/RPC19 RNA polymerase subunit family. Part of the viral DNA-directed RNA polymerase that consists of 8 polII-like subunits (RPB1, RPB2, RPB3, RPB5, RPB6, RPB7, RPB9, RPB10), a capping enzyme and a termination factor.

Its subcellular location is the host cytoplasm. The protein localises to the virion. Functionally, component of the DNA-directed RNA polymerase (RNAP) that catalyzes the transcription in the cytoplasm of viral DNA into RNA using the four ribonucleoside triphosphates as substrates. The protein is DNA-directed RNA polymerase RPB3-11 homolog of Ornithodoros (relapsing fever ticks).